The primary structure comprises 85 residues: U4-theraphotoxin-Hhn1z (85 aa).

A signal peptide spans 1-22 (MKMTLIAILTCAAVLVLHTTAA). Residues 23–48 (EELEAESQLMEVGMPDTELEAVDEER) constitute a propeptide that is removed on maturation. 3 disulfide bridges follow: Cys-52–Cys-66, Cys-56–Cys-77, and Cys-71–Cys-82.

Belongs to the neurotoxin 12 (Hwtx-2) family. 02 (Hwtx-2) subfamily. Expressed by the venom gland.

The protein localises to the secreted. Its function is as follows. Postsynaptic neurotoxin. The chain is U4-theraphotoxin-Hhn1z from Cyriopagopus hainanus (Chinese bird spider).